Here is a 609-residue protein sequence, read N- to C-terminus: Oxidoreductase tpcJ (609 aa).

The N-terminal stretch at 1 to 16 (MITVIKWLVSGCCALA) is a signal peptide. N63, N107, N113, N240, N283, N471, and N601 each carry an N-linked (GlcNAc...) asparagine glycan. 3 consecutive Plastocyanin-like domains span residues 66-186 (VSQQ…HGPS), 196-351 (PWLL…RYDE), and 429-567 (VDWK…EQPK).

Belongs to the multicopper oxidase family. As to expression, specifically expressed in conidia.

It functions in the pathway secondary metabolite biosynthesis. Its function is as follows. Oxidoreductase; part of the gene cluster that mediates the biosynthesis of trypacidin, a mycotoxin with antiprotozoal activity and that plays a role in the infection process. The pathway begins with the synthesis of atrochrysone thioester by the polyketide synthase (PKS) tpcC. The atrochrysone carboxyl ACP thioesterase tpcB then breaks the thioester bond and releases the atrochrysone carboxylic acid from tpcC. The decarboxylase tpcK converts atrochrysone carboxylic acid to atrochrysone which is further reduced into emodin anthrone. The next step is performed by the emodin anthrone oxygenase tpcL that catalyzes the oxidation of emodinanthrone to emodin. Emodin O-methyltransferase encoded by tpcA catalyzes methylation of the 8-hydroxy group of emodin to form questin. Ring cleavage of questin by questin oxidase tpcI leads to desmethylsulochrin via several intermediates including questin epoxide. Another methylation step catalyzed by tpcM leads to the formation of sulochrin which is further converted to monomethylsulfochrin by tpcH. Finally, the tpcJ catalyzes the conversion of monomethylsulfochrin to trypacidin. Trypacidin is toxic for human pulmonary and bronchial epithelial cells by initiating the intracellular formation of nitric oxide (NO) and hydrogen peroxide (H(2)O(2)), thus triggering host necrotic cell death. The trypacidin pathway is also able to produce endocrocin via a distinct route from the endocrocin Enc pathway. In Aspergillus fumigatus (strain ATCC MYA-4609 / CBS 101355 / FGSC A1100 / Af293) (Neosartorya fumigata), this protein is Oxidoreductase tpcJ.